The sequence spans 70 residues: uncharacterized protein (70 aa).

Helical transmembrane passes span 13-33 (YYAF…LLGF) and 39-59 (QTYA…GLII).

It localises to the cell membrane. This is an uncharacterized protein from Escherichia coli O6:H1 (strain CFT073 / ATCC 700928 / UPEC).